Consider the following 1314-residue polypeptide: E3 ubiquitin-protein ligase RNF123 (1314 aa).

An N-acetylalanine modification is found at Ala2. The B30.2/SPRY domain occupies 74 to 254 (VDNEEEESQG…VAFNFGSRPL (181 aa)). Ser675 is subject to Phosphoserine. Residue Arg683 is modified to Asymmetric dimethylarginine. Residues 968–974 (WILVRLW) form an interaction with NFKB1 region. The Zn(2+) site is built by Cys1254, Cys1257, Cys1269, His1271, Cys1274, Cys1277, Cys1288, and Cys1291. An RING-type zinc finger spans residues 1254–1292 (CPICYAHPISAVFQPCGHKSCKACINQHLMNNKDCFFCK).

Component of the KPC complex composed of RNF123/KPC1 and UBAC1/KPC2. Interacts with UBAC1 and CDKN1B via its N-terminal domain. Interacts with RIGI (via N-terminus) and IFIH1 (via N-terminus). Ubiquitinated, leading to its degradation. Deubiquitinated by USP19, thereby stimulating CDKN1B ubiquitin-dependent degradation.

The protein localises to the cytoplasm. It catalyses the reaction S-ubiquitinyl-[E2 ubiquitin-conjugating enzyme]-L-cysteine + [acceptor protein]-L-lysine = [E2 ubiquitin-conjugating enzyme]-L-cysteine + N(6)-ubiquitinyl-[acceptor protein]-L-lysine.. Its pathway is protein modification; protein ubiquitination. Catalytic subunit of the KPC complex that acts as E3 ubiquitin-protein ligase. Promotes the ubiquitination and proteasome-mediated degradation of CDKN1B which is the cyclin-dependent kinase inhibitor at the G0-G1 transition of the cell cycle. Also acts as a key regulator of the NF-kappa-B signaling by promoting maturation of the NFKB1 component of NF-kappa-B: acts by catalyzing ubiquitination of the NFKB1 p105 precursor, leading to limited proteasomal degradation of NFKB1 p105 and generation of the active NFKB1 p50 subunit. Also functions as an inhibitor of innate antiviral signaling mediated by RIGI and IFIH1 independently of its E3 ligase activity. Interacts with the N-terminal CARD domains of RIGI and IFIH1 and competes with the downstream adapter MAVS. The chain is E3 ubiquitin-protein ligase RNF123 from Homo sapiens (Human).